A 420-amino-acid polypeptide reads, in one-letter code: Histidine--tRNA ligase (420 aa).

Belongs to the class-II aminoacyl-tRNA synthetase family. In terms of assembly, homodimer.

It is found in the cytoplasm. The catalysed reaction is tRNA(His) + L-histidine + ATP = L-histidyl-tRNA(His) + AMP + diphosphate + H(+). This chain is Histidine--tRNA ligase, found in Thermotoga sp. (strain RQ2).